The primary structure comprises 605 residues: Phosphoenolpyruvate carboxykinase [GTP] (605 aa).

Substrate-binding positions include Arg-79 and 218–220 (YGG). Lys-227 and His-247 together coordinate Mn(2+). Residue Ser-269 participates in substrate binding. Residue 270 to 275 (ACGKTN) coordinates GTP. Residue Cys-271 is part of the active site. Asp-294 is a binding site for Mn(2+). The span at 364–381 (LTDWKGRDWTPQSDEKAA) shows a compositional bias: basic and acidic residues. The tract at residues 364 to 385 (LTDWKGRDWTPQSDEKAAHPNS) is disordered. 384–386 (NSR) contacts substrate. GTP contacts are provided by residues Arg-386, Arg-417, and 513–516 (FGEN).

This sequence belongs to the phosphoenolpyruvate carboxykinase [GTP] family. As to quaternary structure, monomer. The cofactor is Mn(2+).

Its subcellular location is the cytoplasm. The enzyme catalyses oxaloacetate + GTP = phosphoenolpyruvate + GDP + CO2. It functions in the pathway carbohydrate biosynthesis; gluconeogenesis. Its function is as follows. Catalyzes the conversion of oxaloacetate (OAA) to phosphoenolpyruvate (PEP), the rate-limiting step in the metabolic pathway that produces glucose from lactate and other precursors derived from the citric acid cycle. This is Phosphoenolpyruvate carboxykinase [GTP] from Saccharopolyspora erythraea (strain ATCC 11635 / DSM 40517 / JCM 4748 / NBRC 13426 / NCIMB 8594 / NRRL 2338).